Reading from the N-terminus, the 229-residue chain is Large ribosomal subunit protein uL1 (229 aa).

Belongs to the universal ribosomal protein uL1 family. Part of the 50S ribosomal subunit.

In terms of biological role, binds directly to 23S rRNA. The L1 stalk is quite mobile in the ribosome, and is involved in E site tRNA release. Functionally, protein L1 is also a translational repressor protein, it controls the translation of the L11 operon by binding to its mRNA. The sequence is that of Large ribosomal subunit protein uL1 from Lactococcus lactis subsp. cremoris (strain MG1363).